The primary structure comprises 512 residues: Cytochrome P450 84A4 (512 aa).

A helical transmembrane segment spans residues 7–24 (LIVLVPLLLFLFPHLLLR). Cysteine 447 is a heme binding site.

Belongs to the cytochrome P450 family. Heme is required as a cofactor. As to expression, expressed in seedlings, roots, stems and inflorescence nodes. Low or no expression in leaves, flowers, seeds and lignifying tissue.

Its subcellular location is the membrane. In terms of biological role, cytochrome P450 involved in the production of catechol-substituted substrates needed for the arabidopyrones biosynthesis. Converts p-coumaraldehyde into caffealdehyde. The sequence is that of Cytochrome P450 84A4 (CYP84A4) from Arabidopsis thaliana (Mouse-ear cress).